The chain runs to 430 residues: ATP-dependent RNA helicase cgh-1 (430 aa).

The Q motif motif lies at Val-43 to Glu-71. The Helicase ATP-binding domain occupies Ile-74–Ile-244. Residue Ala-87–Thr-94 coordinates ATP. The short motif at Asp-192–Asp-195 is the DEAD box element. Residues Gly-254–Leu-414 enclose the Helicase C-terminal domain.

It belongs to the DEAD box helicase family. DDX6/DHH1 subfamily. As to quaternary structure, interacts with car-1 in a germline ribonucleoprotein complex. Interacts with ifet-1. Interacts with oma-1, which is a component of a ribonucleoprotein complex, in an RNA-dependent manner. Expression is restricted to two germline precursors Z2 and Z3 in L1 stage hermaphrodites, and is detectable specifically in the gonad at low levels into the L3 stage. Expression is significantly higher during the early L4 stage. In adults, expression remains gonad-specific and was not apparent in the somatically derived uterus. Expressed in germ granules (P granules); when associated with pgl-1.

It localises to the cytoplasm. It catalyses the reaction ATP + H2O = ADP + phosphate + H(+). Its function is as follows. Probable RNA helicase required for oocyte and sperm function. Also required to prevent the physiological germline apoptosis mechanism killing essentially all developing oocytes. The protein is ATP-dependent RNA helicase cgh-1 (cgh-1) of Caenorhabditis elegans.